A 268-amino-acid chain; its full sequence is Undecaprenyl-diphosphatase (268 aa).

8 helical membrane-spanning segments follow: residues 3–23 (VFNL…EFIP), 46–66 (FEVL…SAKL), 84–104 (FGIL…HGFI), 107–127 (VLFE…FILL), 144–164 (YPLP…IPGV), 184–204 (AAEF…AYDL), 218–238 (LIGV…RYLL), and 248–268 (LFGW…LVWG).

This sequence belongs to the UppP family.

It is found in the cell inner membrane. It carries out the reaction di-trans,octa-cis-undecaprenyl diphosphate + H2O = di-trans,octa-cis-undecaprenyl phosphate + phosphate + H(+). Functionally, catalyzes the dephosphorylation of undecaprenyl diphosphate (UPP). Confers resistance to bacitracin. The polypeptide is Undecaprenyl-diphosphatase (Brucella anthropi (strain ATCC 49188 / DSM 6882 / CCUG 24695 / JCM 21032 / LMG 3331 / NBRC 15819 / NCTC 12168 / Alc 37) (Ochrobactrum anthropi)).